Reading from the N-terminus, the 124-residue chain is Small ribosomal subunit protein uS13 (124 aa).

Positions 95 to 124 (GLPVRGQRTRHNARTRKGPRKTVGAKKGKR) are disordered. A compositionally biased stretch (basic residues) spans 101–124 (QRTRHNARTRKGPRKTVGAKKGKR).

It belongs to the universal ribosomal protein uS13 family. Part of the 30S ribosomal subunit. Forms a loose heterodimer with protein S19. Forms two bridges to the 50S subunit in the 70S ribosome.

Located at the top of the head of the 30S subunit, it contacts several helices of the 16S rRNA. In the 70S ribosome it contacts the 23S rRNA (bridge B1a) and protein L5 of the 50S subunit (bridge B1b), connecting the 2 subunits; these bridges are implicated in subunit movement. Contacts the tRNAs in the A and P-sites. In Coprothermobacter proteolyticus (strain ATCC 35245 / DSM 5265 / OCM 4 / BT), this protein is Small ribosomal subunit protein uS13.